Consider the following 67-residue polypeptide: Cell division protein ZapB (67 aa).

A coiled-coil region spans residues 3–59 (LELLSKLETKIQTALETIELLKMELEEEKQKSIGLAEQNQQLSQDLNSWNEKVTGLV).

Belongs to the ZapB family. Homodimer. The ends of the coiled-coil dimer bind to each other, forming polymers. Interacts with FtsZ.

It localises to the cytoplasm. In terms of biological role, non-essential, abundant cell division factor that is required for proper Z-ring formation. It is recruited early to the divisome by direct interaction with FtsZ, stimulating Z-ring assembly and thereby promoting cell division earlier in the cell cycle. Its recruitment to the Z-ring requires functional FtsA or ZipA. The protein is Cell division protein ZapB of Shewanella woodyi (strain ATCC 51908 / MS32).